The chain runs to 159 residues: Transcriptional repressor NrdR (159 aa).

A zinc finger spans residues 3–34 (CPFCRHEDTQVVDSRVSEDGAAIRRRRRCSAC). The ATP-cone domain maps to 49-139 (PAVVKKDGSR…VYRRFEDVSE (91 aa)).

Belongs to the NrdR family. Zn(2+) is required as a cofactor.

Functionally, negatively regulates transcription of bacterial ribonucleotide reductase nrd genes and operons by binding to NrdR-boxes. The polypeptide is Transcriptional repressor NrdR (Burkholderia ambifaria (strain MC40-6)).